Consider the following 30-residue polypeptide: AEVLMDFPQLTMTLPDGREESVMKRTTLVA.

The protein belongs to the ATPase alpha/beta chains family. As to quaternary structure, V-ATPase is a heteromultimeric enzyme composed of a peripheral catalytic V1 complex (main components: subunits A, B, C, D, E, and F) attached to an integral membrane V0 proton pore complex (main component: the proteolipid protein).

The enzyme catalyses ATP + H2O + 4 H(+)(in) = ADP + phosphate + 5 H(+)(out). Catalytic subunit of the peripheral V1 complex of vacuolar ATPase. V-ATPase vacuolar ATPase is responsible for acidifying a variety of intracellular compartments in eukaryotic cells. The sequence is that of V-type proton ATPase catalytic subunit A isoform 1 from Psilotum nudum (Whisk fern).